We begin with the raw amino-acid sequence, 292 residues long: Poly(U)-specific endoribonuclease-B (292 aa).

The EndoU domain occupies Val-8–Ser-285. Catalysis depends on residues His-162, His-178, and Lys-224.

It belongs to the ENDOU family. In terms of assembly, monomer. The cofactor is Mn(2+).

It is found in the nucleus. It carries out the reaction uridylyl-uridylyl-ribonucleotide-RNA = a 3'-end uridylyl-2',3'-cyclophospho-uridine-RNA + a 5'-end dephospho-ribonucleoside-RNA. Its function is as follows. Poly(U)-specific endoribonuclease involved in the processing of intron-encoded box C/D snoRNAs, such as U16 and U86. Releases products that have 2',3'-cyclic phosphate termini at the 3'-end. This Xenopus laevis (African clawed frog) protein is Poly(U)-specific endoribonuclease-B (endou-b).